A 116-amino-acid polypeptide reads, in one-letter code: Large ribosomal subunit protein bL19 (116 aa).

The protein belongs to the bacterial ribosomal protein bL19 family.

Functionally, this protein is located at the 30S-50S ribosomal subunit interface and may play a role in the structure and function of the aminoacyl-tRNA binding site. The chain is Large ribosomal subunit protein bL19 from Haemophilus ducreyi (strain 35000HP / ATCC 700724).